We begin with the raw amino-acid sequence, 70 residues long: Potassium channel toxin kappa-KTx 2.5 (70 aa).

The signal sequence occupies residues 1 to 26; the sequence is MESSRKSYVLMLFLAFVIMNVCSVSG. The propeptide occupies 27–42; that stretch reads EPKDGEIAGFEMEEAR. Intrachain disulfides connect cysteine 46/cysteine 64 and cysteine 50/cysteine 60.

The protein belongs to the short scorpion toxin superfamily. Potassium channel inhibitor kappa-KTx family. Kappa-KTx 2 subfamily. As to expression, expressed by the venom gland.

The protein resides in the secreted. Voltage-independently blocks potassium currents on hKv1.1/KCNA1 (IC(50)=217 uM), and hKv1.4/KCNA4 (IC(50)=71 uM) (expressed in CHO cells). The protein is Potassium channel toxin kappa-KTx 2.5 of Opisthacanthus cayaporum (South American scorpion).